An 89-amino-acid polypeptide reads, in one-letter code: Signal recognition particle 19 kDa protein (89 aa).

This sequence belongs to the SRP19 family. As to quaternary structure, part of the signal recognition particle protein translocation system, which is composed of SRP and FtsY. Archaeal SRP consists of a 7S RNA molecule of 300 nucleotides and two protein subunits: SRP54 and SRP19.

The protein resides in the cytoplasm. Involved in targeting and insertion of nascent membrane proteins into the cytoplasmic membrane. Binds directly to 7S RNA and mediates binding of the 54 kDa subunit of the SRP. The sequence is that of Signal recognition particle 19 kDa protein from Methanococcus vannielii (strain ATCC 35089 / DSM 1224 / JCM 13029 / OCM 148 / SB).